We begin with the raw amino-acid sequence, 570 residues long: Urease subunit alpha (570 aa).

One can recognise a Urease domain in the interval 131 to 570 (GGMDSHIHFI…LPMAQRYFLF (440 aa)). His-136, His-138, and Lys-219 together coordinate Ni(2+). An N6-carboxylysine modification is found at Lys-219. His-221 provides a ligand contact to substrate. Ni(2+) is bound by residues His-248 and His-274. His-322 (proton donor) is an active-site residue. Residue Asp-362 coordinates Ni(2+).

Belongs to the metallo-dependent hydrolases superfamily. Urease alpha subunit family. As to quaternary structure, heterotrimer of UreA (gamma), UreB (beta) and UreC (alpha) subunits. Three heterotrimers associate to form the active enzyme. Ni cation serves as cofactor. In terms of processing, carboxylation allows a single lysine to coordinate two nickel ions.

The protein localises to the cytoplasm. The catalysed reaction is urea + 2 H2O + H(+) = hydrogencarbonate + 2 NH4(+). It participates in nitrogen metabolism; urea degradation; CO(2) and NH(3) from urea (urease route): step 1/1. This is Urease subunit alpha from Sinorhizobium fredii (strain NBRC 101917 / NGR234).